A 272-amino-acid polypeptide reads, in one-letter code: Phosphatidylglycerol--prolipoprotein diacylglyceryl transferase (272 aa).

Transmembrane regions (helical) follow at residues 17-37 (LQVH…WGLA), 55-75 (LVFY…VLFY), 90-110 (VWTG…AMLF), 125-145 (FIAP…FIGG), 174-194 (PSQI…LWWF), 202-222 (MAVS…MEFF), and 230-250 (GFIL…MLLI). Arg-138 is an a 1,2-diacyl-sn-glycero-3-phospho-(1'-sn-glycerol) binding site.

It belongs to the Lgt family.

The protein localises to the cell inner membrane. The enzyme catalyses L-cysteinyl-[prolipoprotein] + a 1,2-diacyl-sn-glycero-3-phospho-(1'-sn-glycerol) = an S-1,2-diacyl-sn-glyceryl-L-cysteinyl-[prolipoprotein] + sn-glycerol 1-phosphate + H(+). It participates in protein modification; lipoprotein biosynthesis (diacylglyceryl transfer). Its function is as follows. Catalyzes the transfer of the diacylglyceryl group from phosphatidylglycerol to the sulfhydryl group of the N-terminal cysteine of a prolipoprotein, the first step in the formation of mature lipoproteins. This is Phosphatidylglycerol--prolipoprotein diacylglyceryl transferase from Acinetobacter baumannii (strain SDF).